Reading from the N-terminus, the 145-residue chain is D-aminoacyl-tRNA deacylase (145 aa).

Positions 137 to 138 (GP) match the Gly-cisPro motif, important for rejection of L-amino acids motif.

Belongs to the DTD family. As to quaternary structure, homodimer.

Its subcellular location is the cytoplasm. It carries out the reaction glycyl-tRNA(Ala) + H2O = tRNA(Ala) + glycine + H(+). The enzyme catalyses a D-aminoacyl-tRNA + H2O = a tRNA + a D-alpha-amino acid + H(+). An aminoacyl-tRNA editing enzyme that deacylates mischarged D-aminoacyl-tRNAs. Also deacylates mischarged glycyl-tRNA(Ala), protecting cells against glycine mischarging by AlaRS. Acts via tRNA-based rather than protein-based catalysis; rejects L-amino acids rather than detecting D-amino acids in the active site. By recycling D-aminoacyl-tRNA to D-amino acids and free tRNA molecules, this enzyme counteracts the toxicity associated with the formation of D-aminoacyl-tRNA entities in vivo and helps enforce protein L-homochirality. The chain is D-aminoacyl-tRNA deacylase from Yersinia pestis bv. Antiqua (strain Antiqua).